Consider the following 595-residue polypeptide: Quinoprotein alcohol dehydrogenase PedH (595 aa).

The signal sequence occupies residues 1 to 27 (MTRSPRRPLFAVSLVLSAMLLAGAAHA). Pyrroloquinoline quinone is bound at residue Gln-87. A disulfide bond links Cys-131 and Cys-132. Pyrroloquinoline quinone-binding residues include Arg-137, Ser-181, Gly-197, and Gly-198. Position 199 (Glu-199) interacts with Pr(3+). Residue Trp-263 participates in pyrroloquinoline quinone binding. 3 residues coordinate Pr(3+): Asn-281, Asp-323, and Asp-325. Asp-323 serves as the catalytic Proton acceptor. Pyrroloquinoline quinone-binding residues include Arg-350, Asn-417, Trp-493, and Ala-557.

This sequence belongs to the bacterial PQQ dehydrogenase family. It depends on Pr(3+) as a cofactor. Requires Nd(3+) as cofactor. La(3+) serves as cofactor. The cofactor is Ce(3+). Sm(3+) is required as a cofactor. It depends on pyrroloquinoline quinone as a cofactor. The disulfide ring formed between the two adjacent cysteine residues Cys-131 and Cys-132 is essential for efficient electron transfer at pH 7 from PedH to its natural electron acceptor cytochrome c550.

Its subcellular location is the periplasm. It catalyses the reaction a primary alcohol + 2 Fe(III)-[cytochrome c] = an aldehyde + 2 Fe(II)-[cytochrome c] + 2 H(+). The enzyme catalyses ethanol + 2 Fe(III)-[cytochrome c] = acetaldehyde + 2 Fe(II)-[cytochrome c] + 2 H(+). It carries out the reaction butan-1-ol + 2 Fe(III)-[cytochrome c] = butanal + 2 Fe(II)-[cytochrome c] + 2 H(+). The catalysed reaction is butan-2-ol + 2 Fe(III)-[cytochrome c] = butan-2-one + 2 Fe(II)-[cytochrome c] + 2 H(+). It catalyses the reaction 2-phenylethanol + 2 Fe(III)-[cytochrome c] = 2-phenylacetaldehyde + 2 Fe(II)-[cytochrome c] + 2 H(+). The enzyme catalyses octan-1-ol + 2 Fe(III)-[cytochrome c] = octanal + 2 Fe(II)-[cytochrome c] + 2 H(+). It carries out the reaction hexan-1-ol + 2 Fe(III)-[cytochrome c] = hexanal + 2 Fe(II)-[cytochrome c] + 2 H(+). The catalysed reaction is cinnamyl alcohol + 2 Fe(III)-[cytochrome c] = cinnamaldehyde + 2 Fe(II)-[cytochrome c] + 2 H(+). It catalyses the reaction farnesol + 2 Fe(III)-[cytochrome c] = farnesal + 2 Fe(II)-[cytochrome c] + 2 H(+). The enzyme catalyses an aldehyde + 2 Fe(III)-[cytochrome c] + H2O = a carboxylate + 2 Fe(II)-[cytochrome c] + 3 H(+). It carries out the reaction acetaldehyde + 2 Fe(III)-[cytochrome c] + H2O = 2 Fe(II)-[cytochrome c] + acetate + 3 H(+). The catalysed reaction is butanal + 2 Fe(III)-[cytochrome c] + H2O = butanoate + 2 Fe(II)-[cytochrome c] + 3 H(+). It catalyses the reaction hexanal + 2 Fe(III)-[cytochrome c] + H2O = hexanoate + 2 Fe(II)-[cytochrome c] + 3 H(+). The enzyme catalyses octanal + 2 Fe(III)-[cytochrome c] + H2O = octanoate + 2 Fe(II)-[cytochrome c] + 3 H(+). Functionally, alcohol dehydrogenase that catalyzes the oxidation of a range of substrates, including linear and aromatic primary and secondary alcohols, as well as aldehydes, but only in the presence of lanthanides, allowing bacterial growth with a variety of volatile organic compounds (VOCs) as carbon and energy sources. Is also involved in the transcriptional regulation of pedE and pedH, most likely acting as a lanthanide sensory module. Uses a specific inducible cytochrome c550, encoded by the adjacent gene in the locus, as electron acceptor. The polypeptide is Quinoprotein alcohol dehydrogenase PedH (Pseudomonas putida (strain ATCC 47054 / DSM 6125 / CFBP 8728 / NCIMB 11950 / KT2440)).